The primary structure comprises 326 residues: tRNA-modifying protein YgfZ (326 aa).

The folate site is built by tryptophan 27 and tryptophan 189.

This sequence belongs to the tRNA-modifying YgfZ family.

The protein localises to the cytoplasm. Functionally, folate-binding protein involved in regulating the level of ATP-DnaA and in the modification of some tRNAs. It is probably a key factor in regulatory networks that act via tRNA modification, such as initiation of chromosomal replication. The polypeptide is tRNA-modifying protein YgfZ (Salmonella arizonae (strain ATCC BAA-731 / CDC346-86 / RSK2980)).